We begin with the raw amino-acid sequence, 100 residues long: Eukaryotic translation initiation factor 4E-binding protein 3 (100 aa).

Positions 40 to 46 (YDRKFLL) match the YXXXXLphi motif motif. The tract at residues 81-100 (LKEQETEEEIPDDAQFEMDI) is disordered. The span at 85 to 100 (ETEEEIPDDAQFEMDI) shows a compositional bias: acidic residues. Positions 96–100 (FEMDI) match the TOS motif motif.

Belongs to the eIF4E-binding protein family. Interacts with EIF4E. Interacts with RPA2 (in unphosphorylated form via N-terminus); the interaction enhances EIF4EBP3-mediated inhibition of EIF4E-mediated mRNA nuclear export. In terms of processing, phosphorylated. In terms of tissue distribution, expression is highest in skeletal muscle, heart, kidney, and pancreas, whereas there is very little expression in brain and thymus.

The protein resides in the cytoplasm. It is found in the nucleus. Its function is as follows. Repressor of translation initiation that regulates EIF4E activity by preventing its assembly into the eIF4F complex: the hypophosphorylated form competes with EIF4G1/EIF4G3 and strongly binds to EIF4E, leading to repression of translation. In contrast, the hyperphosphorylated form dissociates from EIF4E, allowing interaction between EIF4G1/EIF4G3 and EIF4E, leading to initiation of translation. Inhibits EIF4E-mediated mRNA nuclear export. This chain is Eukaryotic translation initiation factor 4E-binding protein 3 (EIF4EBP3), found in Homo sapiens (Human).